The chain runs to 127 residues: Ribosome-binding factor A (127 aa).

This sequence belongs to the RbfA family. Monomer. Binds 30S ribosomal subunits, but not 50S ribosomal subunits or 70S ribosomes.

It localises to the cytoplasm. In terms of biological role, one of several proteins that assist in the late maturation steps of the functional core of the 30S ribosomal subunit. Associates with free 30S ribosomal subunits (but not with 30S subunits that are part of 70S ribosomes or polysomes). Required for efficient processing of 16S rRNA. May interact with the 5'-terminal helix region of 16S rRNA. The polypeptide is Ribosome-binding factor A (Rickettsia typhi (strain ATCC VR-144 / Wilmington)).